The following is a 934-amino-acid chain: Serine/threonine-protein kinase PknD (934 aa).

The 293-residue stretch at Y4 to L296 folds into the Protein kinase domain. Residues I10 to V18 and K33 each bind ATP. Catalysis depends on D138, which acts as the Proton acceptor.

The protein belongs to the protein kinase superfamily. Ser/Thr protein kinase family. In terms of processing, autophosphorylated on serine and threonine residues.

It carries out the reaction L-seryl-[protein] + ATP = O-phospho-L-seryl-[protein] + ADP + H(+). The enzyme catalyses L-threonyl-[protein] + ATP = O-phospho-L-threonyl-[protein] + ADP + H(+). Together with the serine/threonine kinase Pkn1, may play a role in the specific interactions with host proteins during intracellular growth. In Chlamydia trachomatis serovar A (strain ATCC VR-571B / DSM 19440 / HAR-13), this protein is Serine/threonine-protein kinase PknD.